Here is a 290-residue protein sequence, read N- to C-terminus: Acetyl-coenzyme A carboxylase carboxyl transferase subunit beta (290 aa).

In terms of domain architecture, CoA carboxyltransferase N-terminal spans leucine 27–alanine 290. Zn(2+) is bound by residues cysteine 31, cysteine 34, cysteine 50, and cysteine 53. Residues cysteine 31–cysteine 53 form a C4-type zinc finger.

Belongs to the AccD/PCCB family. As to quaternary structure, acetyl-CoA carboxylase is a heterohexamer composed of biotin carboxyl carrier protein (AccB), biotin carboxylase (AccC) and two subunits each of ACCase subunit alpha (AccA) and ACCase subunit beta (AccD). Zn(2+) serves as cofactor.

The protein resides in the cytoplasm. The catalysed reaction is N(6)-carboxybiotinyl-L-lysyl-[protein] + acetyl-CoA = N(6)-biotinyl-L-lysyl-[protein] + malonyl-CoA. The protein operates within lipid metabolism; malonyl-CoA biosynthesis; malonyl-CoA from acetyl-CoA: step 1/1. Component of the acetyl coenzyme A carboxylase (ACC) complex. Biotin carboxylase (BC) catalyzes the carboxylation of biotin on its carrier protein (BCCP) and then the CO(2) group is transferred by the transcarboxylase to acetyl-CoA to form malonyl-CoA. This chain is Acetyl-coenzyme A carboxylase carboxyl transferase subunit beta, found in Burkholderia multivorans (strain ATCC 17616 / 249).